The chain runs to 47 residues: uncharacterized protein (47 aa).

2 disordered regions span residues 1-20 and 25-47; these read MSTD…EEWQ and EKEK…NRKG. A compositionally biased stretch (basic and acidic residues) spans 25–40; the sequence is EKEKDENNRLFQEQKQ.

This is an uncharacterized protein from Dictyostelium discoideum (Social amoeba).